Here is a 493-residue protein sequence, read N- to C-terminus: 3-octaprenyl-4-hydroxybenzoate carboxy-lyase (493 aa).

Asn175 serves as a coordination point for Mn(2+). Prenylated FMN contacts are provided by residues 178 to 180 (IYR), 192 to 194 (RWL), and 197 to 198 (RG). Mn(2+) is bound at residue Glu241. The active-site Proton donor is the Asp290.

This sequence belongs to the UbiD family. As to quaternary structure, homohexamer. It depends on prenylated FMN as a cofactor. Mn(2+) is required as a cofactor.

It is found in the cell membrane. It catalyses the reaction a 4-hydroxy-3-(all-trans-polyprenyl)benzoate + H(+) = a 2-(all-trans-polyprenyl)phenol + CO2. It functions in the pathway cofactor biosynthesis; ubiquinone biosynthesis. In terms of biological role, catalyzes the decarboxylation of 3-octaprenyl-4-hydroxy benzoate to 2-octaprenylphenol, an intermediate step in ubiquinone biosynthesis. The sequence is that of 3-octaprenyl-4-hydroxybenzoate carboxy-lyase from Photorhabdus laumondii subsp. laumondii (strain DSM 15139 / CIP 105565 / TT01) (Photorhabdus luminescens subsp. laumondii).